Consider the following 397-residue polypeptide: Enoyl-[acyl-carrier-protein] reductase [NADH] (397 aa).

NAD(+) is bound by residues 48-53 (GASTGY), 74-75 (FE), 111-112 (DA), and 139-140 (LA). Tyr-225 contacts substrate. The active-site Proton donor is Tyr-235. NAD(+) contacts are provided by residues Lys-244 and 273-275 (VVT).

The protein belongs to the TER reductase family. As to quaternary structure, monomer.

The enzyme catalyses a 2,3-saturated acyl-[ACP] + NAD(+) = a (2E)-enoyl-[ACP] + NADH + H(+). It participates in lipid metabolism; fatty acid biosynthesis. In terms of biological role, involved in the final reduction of the elongation cycle of fatty acid synthesis (FAS II). Catalyzes the reduction of a carbon-carbon double bond in an enoyl moiety that is covalently linked to an acyl carrier protein (ACP). This Pseudoalteromonas translucida (strain TAC 125) protein is Enoyl-[acyl-carrier-protein] reductase [NADH].